The chain runs to 599 residues: MNKRGYECSQEDTDKLPESKRQKVPALASVIVEAVKVDSLQRLCSSLEPLFRRIVSEEVERALSRLGNAKLTSRSPEPKRIQDRNGRNLQLHFRTRMPPHLFTGGKVEGERGSAIHVVLIDANTGNVVQTGEESASKLNVVVLEGDFNDEDDEDWTREHFESFEVKEREGKRPILTGDTQIVLKEGVGTLGELTFTDNSSWIRSRKFRLGVKPASGYGDSFCIREAKTEPFAVKDHRGELYKKHYPPAVHDEVWRLDRIAKDGVLHKKLLKANIVTVEDFLRLLVKDPQKLRNLLGSGMSNRMWENTVEHAKTCVLGGKLYVFYTDQTHATGVVFNHIYEFRGLITNGQFLSLESLNHDQKISADILVKLAYENWHKAIEYDGKLLNCLPVAEKEIKSLLEPKMVSAQTAPNHQQLHNQNNRQTVQGHQNAITYSPVPQPIDYPQFAQQHCNQLLPSFPCNVQDYNRSMESSNDSSSYNGEDWCPPRAAGQGLEDIFSEEIRLRSSEMLETDDMQRLLKTFGIGVNTVGTQGGFGQTDESCYGYSIPYQAQIDNTYRRERNRGSGKAVVGWLKLKAALRWGIFIRKKAAERRPQIVEID.

The segment at 1 to 21 is disordered; that stretch reads MNKRGYECSQEDTDKLPESKR. Positions 1–80 are calmodulin-binding; that stretch reads MNKRGYECSQ…LTSRSPEPKR (80 aa). The interval 150 to 273 is DNA-binding; sequence EDDEDWTREH…VLHKKLLKAN (124 aa).

Belongs to the plant ACBP60 protein family. In terms of assembly, interacts with calmodulin (CaM).

Its subcellular location is the nucleus. Functionally, transcription activator that binds DNA in a sequence-specific manner, likely 5'-GAAATTTTGG-3', to promote the expression of target genes. In Arabidopsis thaliana (Mouse-ear cress), this protein is Calmodulin-binding protein 60 E.